The chain runs to 1809 residues: Pyochelin synthetase PchF (1809 aa).

Residues Phe-69–Pro-490 form a condensation/cyclization region. The adenylation stretch occupies residues Phe-520–Arg-915. Residues Ala-1407–Pro-1488 enclose the Carrier domain. O-(pantetheine 4'-phosphoryl)serine is present on Ser-1442. Residues Leu-1584 to Gln-1797 are thioesterase.

The protein belongs to the NRP synthetase family. Pantetheine 4'-phosphate is required as a cofactor.

It carries out the reaction holo-[peptidyl-carrier protein] + L-cysteine + ATP = L-cysteinyl-[peptidyl-carrier protein] + AMP + diphosphate. Its pathway is siderophore biosynthesis. Its function is as follows. Involved in the biosynthesis of the siderophore pyochelin. Adenylates L-cysteine and loads it onto its peptidyl carrier domain via a thioester linkage to the phosphopanthetheine moiety. Then forms a peptide bond between the salicyl-thiazolinyl intermediate bound to the second carrier domain of PchE and the cysteine bound to its own peptidyl carrier domain to form the salicyl-thiazolinyl-cysteinyl-S-PCP2 intermediate. It subsequently cyclizes the C-terminal cysteine to form the second thiazoline heterocycle in the salicyl-thiazolinyl-thiazolinyl-S-PCP2 intermediate. When this intermediate is released by the action of a thioesterase, it produces the tricyclic acid hydroxyphenyl-thiazolyl-thiazolinyl-carboxylic acid (HPTT-COOH), an advanced intermediate containing the aryl-4,2-bis-heterocyclic skeleton of the bithiazoline class of siderophores. The protein is Pyochelin synthetase PchF of Pseudomonas aeruginosa (strain ATCC 15692 / DSM 22644 / CIP 104116 / JCM 14847 / LMG 12228 / 1C / PRS 101 / PAO1).